A 545-amino-acid chain; its full sequence is Chaperonin GroEL 3 (545 aa).

ATP-binding positions include 29 to 32, 86 to 90, G413, 479 to 481, and D495; these read TLGP, DGTTT, and DAV. The segment at 526-545 is disordered; sequence DKQAKAPAGVGPGPGEGFDY. Over residues 535–545 the composition is skewed to gly residues; that stretch reads VGPGPGEGFDY.

It belongs to the chaperonin (HSP60) family. Forms a cylinder of 14 subunits composed of two heptameric rings stacked back-to-back. Interacts with the co-chaperonin GroES.

It localises to the cytoplasm. The enzyme catalyses ATP + H2O + a folded polypeptide = ADP + phosphate + an unfolded polypeptide.. Functionally, together with its co-chaperonin GroES, plays an essential role in assisting protein folding. The GroEL-GroES system forms a nano-cage that allows encapsulation of the non-native substrate proteins and provides a physical environment optimized to promote and accelerate protein folding. In Trichormus variabilis (strain ATCC 29413 / PCC 7937) (Anabaena variabilis), this protein is Chaperonin GroEL 3.